The following is a 442-amino-acid chain: SPRY domain-containing protein 3 (442 aa).

One can recognise a B30.2/SPRY domain in the interval 17 to 204; sequence DLNLHYRFLN…VRLHLNAELG (188 aa). The segment at 371 to 394 is disordered; the sequence is EGEEEEEEEEEEEDGEEIEPEHEG. Acidic residues predominate over residues 372-390; the sequence is GEEEEEEEEEEEDGEEIEP.

This chain is SPRY domain-containing protein 3 (SPRYD3), found in Pongo abelii (Sumatran orangutan).